The chain runs to 924 residues: Intercellular adhesion molecule 5 (924 aa).

Residues 1–31 (MPGPSPGLRRALLGLWAALGLGLFGLSAVSQ) form the signal peptide. The Extracellular segment spans residues 32–835 (EPFWADLQPR…RITVRVAGPW (804 aa)). 9 consecutive Ig-like C2-type domains span residues 48 to 130 (GGSL…PLPP), 135 to 235 (GENF…RLAA), 242 to 329 (GSER…LLTL), 337 to 402 (GQMV…SAEL), 408 to 486 (PRLD…VTLT), 491 to 568 (PALD…VAVT), 573 to 662 (PRFE…VVSA), 666 to 739 (PEMD…RTVT), and 746 to 830 (PVVA…ITVR). Asn54 is a glycosylation site (N-linked (GlcNAc...) (high mannose) asparagine). Cystine bridges form between Cys55–Cys99 and Cys59–Cys103. 2 N-linked (GlcNAc...) asparagine glycosylation sites follow: Asn74 and Asn137. An intrachain disulfide couples Cys142 to Cys198. 2 positions are modified to phosphothreonine: Thr182 and Thr184. Asn195 and Asn214 each carry an N-linked (GlcNAc...) asparagine glycan. A disulfide bond links Cys249 and Cys302. Residues Asn303, Asn316, Asn371, and Asn397 are each glycosylated (N-linked (GlcNAc...) asparagine). Cysteines 344 and 383 form a disulfide. Cystine bridges form between Cys415–Cys470, Cys498–Cys552, and Cys580–Cys645. N-linked (GlcNAc...) asparagine glycosylation is found at Asn583 and Asn646. Cysteines 673 and 725 form a disulfide. N-linked (GlcNAc...) asparagine glycans are attached at residues Asn764, Asn795, and Asn796. Cys769 and Cys814 are disulfide-bonded. Residues 836–856 (LWVAVGGAAGGAALLAAGAGL) form a helical membrane-spanning segment. Topologically, residues 857–924 (AFYVQSTACK…EVFAIQLTSA (68 aa)) are cytoplasmic. Gly residues predominate over residues 891–903 (AGGAAGAEGGPEA). The segment at 891–911 (AGGAAGAEGGPEAAGGAAESP) is disordered.

Belongs to the immunoglobulin superfamily. ICAM family. Glycosylation at Asn-54 is critical for functional folding. In terms of tissue distribution, expressed on neurons in the most rostral segment of the mammalian brain, the telencephalon.

The protein resides in the membrane. ICAM proteins are ligands for the leukocyte adhesion protein LFA-1 (integrin alpha-L/beta-2). The sequence is that of Intercellular adhesion molecule 5 (ICAM5) from Homo sapiens (Human).